The primary structure comprises 680 residues: Methionine--tRNA ligase (680 aa).

Positions 14-24 (PYANGPIHLGH) match the 'HIGH' region motif. C145, C148, C158, and C161 together coordinate Zn(2+). A 'KMSKS' region motif is present at residues 330-334 (KMSKS). K333 serves as a coordination point for ATP. Residues 579-680 (DFAKVDFRIA…DGAQPGMRVK (102 aa)) form the tRNA-binding domain.

It belongs to the class-I aminoacyl-tRNA synthetase family. MetG type 1 subfamily. As to quaternary structure, homodimer. Requires Zn(2+) as cofactor.

It localises to the cytoplasm. The enzyme catalyses tRNA(Met) + L-methionine + ATP = L-methionyl-tRNA(Met) + AMP + diphosphate. In terms of biological role, is required not only for elongation of protein synthesis but also for the initiation of all mRNA translation through initiator tRNA(fMet) aminoacylation. This is Methionine--tRNA ligase from Hydrogenovibrio crunogenus (strain DSM 25203 / XCL-2) (Thiomicrospira crunogena).